The following is a 367-amino-acid chain: Alanine racemase (367 aa).

The Proton acceptor; specific for D-alanine role is filled by K35. K35 carries the N6-(pyridoxal phosphate)lysine modification. R130 is a binding site for substrate. Y259 (proton acceptor; specific for L-alanine) is an active-site residue. M307 serves as a coordination point for substrate.

The protein belongs to the alanine racemase family. Requires pyridoxal 5'-phosphate as cofactor.

The enzyme catalyses L-alanine = D-alanine. Its pathway is amino-acid biosynthesis; D-alanine biosynthesis; D-alanine from L-alanine: step 1/1. In terms of biological role, catalyzes the interconversion of L-alanine and D-alanine. May also act on other amino acids. This chain is Alanine racemase (alr), found in Delftia acidovorans (strain DSM 14801 / SPH-1).